A 159-amino-acid polypeptide reads, in one-letter code: RxLR effector protein 24 (159 aa).

A signal peptide spans 1–18 (MRFLVWVFFVGLVTFVSG). A RxLR-dEER motif is present at residues 58-82 (RFLRSNANQDLTTANDDSDVKEEER). Residues 109 to 159 (EKAFQHMMKQGETPTSLAKRLEIGGAAELRYEKVYEKYTAWWINYHTVAGT) are RABA-binding domain.

Belongs to the RxLR effector family. As to quaternary structure, interacts with potato RABA GTPases including RABA1a, RABA2a and RABA4a.

It localises to the secreted. It is found in the host cell membrane. Its subcellular location is the host endomembrane system. In terms of biological role, effector protein that contributes to pathogen virulence. Targets members of the RABA GTPases subfamily to inhibit vesicular secretion, leading to an accumulation of secretory proteins in the endoplasmic reticulum. The protein is RxLR effector protein 24 of Phytophthora infestans (strain T30-4) (Potato late blight agent).